The primary structure comprises 251 residues: Seminal metalloprotease 1 (251 aa).

The signal sequence occupies residues 1 to 18; that stretch reads MFPQIWGVIFLFTPTVFS. Residues 44–248 form the Peptidase M12A domain; it reads NGIVNQIYHW…RKLNKMYRCP (205 aa). Residues Asn-55 and Asn-120 are each glycosylated (N-linked (GlcNAc...) asparagine). Cystine bridges form between Cys-87/Cys-247 and Cys-111/Cys-136. Position 144 (His-144) interacts with Zn(2+). The active site involves Glu-145. The Zn(2+) site is built by His-148 and His-154. A glycan (N-linked (GlcNAc...) asparagine) is linked at Asn-185.

Requires Zn(2+) as cofactor. Post-translationally, undergoes cleavage in the male during mating with a cleaved product detected in the ejaculatory duct and/or bulb of males by 8-10 minutes after the start of mating. Further cleavage occurs in the mated female. May undergo cleavage in a two-step process where it is first cleaved by Sems, making it susceptible to activational cleavage which may be carried out by another protease or by autocleavage. As to expression, produced in the male accessory glands and secreted into seminal fluid. In mated females, confined to the reproductive tract and also detected in eggs laid by mated females (at protein level).

The protein localises to the secreted. Its function is as follows. Seminal fluid metalloprotease which is transferred to females during mating and is required for processing of two other seminal fluid proteins Acp26Aa and Acp36DE in mated females. This chain is Seminal metalloprotease 1, found in Drosophila melanogaster (Fruit fly).